We begin with the raw amino-acid sequence, 427 residues long: tRNA(Ile)-lysidine synthase (427 aa).

S27–S32 is a binding site for ATP.

This sequence belongs to the tRNA(Ile)-lysidine synthase family.

The protein localises to the cytoplasm. It carries out the reaction cytidine(34) in tRNA(Ile2) + L-lysine + ATP = lysidine(34) in tRNA(Ile2) + AMP + diphosphate + H(+). Its function is as follows. Ligates lysine onto the cytidine present at position 34 of the AUA codon-specific tRNA(Ile) that contains the anticodon CAU, in an ATP-dependent manner. Cytidine is converted to lysidine, thus changing the amino acid specificity of the tRNA from methionine to isoleucine. This Streptococcus equi subsp. zooepidemicus (strain H70) protein is tRNA(Ile)-lysidine synthase.